The chain runs to 233 residues: 7-cyano-7-deazaguanine synthase (233 aa).

ATP is bound at residue 18-28; it reads FSGGQDSTTCL. The Zn(2+) site is built by cysteine 198, cysteine 213, cysteine 216, and cysteine 219.

It belongs to the QueC family. It depends on Zn(2+) as a cofactor.

The enzyme catalyses 7-carboxy-7-deazaguanine + NH4(+) + ATP = 7-cyano-7-deazaguanine + ADP + phosphate + H2O + H(+). It participates in purine metabolism; 7-cyano-7-deazaguanine biosynthesis. Functionally, catalyzes the ATP-dependent conversion of 7-carboxy-7-deazaguanine (CDG) to 7-cyano-7-deazaguanine (preQ(0)). The sequence is that of 7-cyano-7-deazaguanine synthase from Wolinella succinogenes (strain ATCC 29543 / DSM 1740 / CCUG 13145 / JCM 31913 / LMG 7466 / NCTC 11488 / FDC 602W) (Vibrio succinogenes).